Consider the following 177-residue polypeptide: Nucleoside triphosphate/diphosphate phosphatase (177 aa).

Arg23 acts as the Proton donor in catalysis. Mg(2+) contacts are provided by Asn87, Asp103, Asp105, Asp107, Asp120, and Glu123.

The protein belongs to the Ntdp family. Mg(2+) serves as cofactor.

The enzyme catalyses a ribonucleoside 5'-triphosphate + H2O = a ribonucleoside 5'-diphosphate + phosphate + H(+). It catalyses the reaction a ribonucleoside 5'-diphosphate + H2O = a ribonucleoside 5'-phosphate + phosphate + H(+). In terms of biological role, has nucleoside phosphatase activity towards nucleoside triphosphates and nucleoside diphosphates. In Enterococcus faecalis (strain ATCC 700802 / V583), this protein is Nucleoside triphosphate/diphosphate phosphatase.